Consider the following 725-residue polypeptide: Palmitoyltransferase AKR1 (725 aa).

Residues 1–303 (MGTIAMASIN…LKDKRSFVTR (303 aa)) are Cytoplasmic-facing. ANK repeat units follow at residues 84–113 (EGITPLHWAAINNQYAMCKFLIEHGAEINR), 118–147 (SIATPLQWAAQRCHYYTVNLLLQHGADPLV), 151–180 (QGYNTLHISTFNGNVLLLVLLLHQGIPVDV), 184–213 (FGHTALMWAAYKGFPQCVDLFLRWGASVHA), and 217–246 (QGFTALHWALVKGSPGCILKLIEYGADRFA). Residues 304–324 (FLFFWPFVLVWAMLVAMSSAP) form a helical membrane-spanning segment. Residues 325 to 326 (VY) are Lumenal-facing. Residues 327–347 (IGVPLGIAAVYAIQWVAQQVL) traverse the membrane as a helical segment. The Cytoplasmic portion of the chain corresponds to 348–364 (EYAPSDMRHFHKTPWLT). Residues 365–385 (GIFAATLFWTGVNWLTTVLFA) form a helical membrane-spanning segment. Over 386–397 (TTLGAPEGKGHG) the chain is Lumenal. A helical membrane pass occupies residues 398-418 (ILNFLFALFFGFTVYFYIASM). At 419–495 (RYDPGFVPKM…NCVGINNHRH (77 aa)) the chain is on the cytoplasmic side. The DHHC domain maps to 451–501 (NFCVTCMIQTPLRSKHCRRCQRCVAKHDHHCPWVYNCVGINNHRHFFFYLI). The active-site S-palmitoyl cysteine intermediate is Cys481. Residues 496–516 (FFFYLISLTMGIVSYDFLLYY) form a helical membrane-spanning segment. The Lumenal portion of the chain corresponds to 517-547 (YFDTVSKNASETCNVLSPTLCKYINADSYTS). A helical membrane pass occupies residues 548-568 (ILAIWITMQLLWVTMLLFTQF). Topologically, residues 569–725 (IQVARAMTTY…YEAVGTEDVV (157 aa)) are cytoplasmic.

Belongs to the DHHC palmitoyltransferase family. AKR/ZDHHC17 subfamily.

It is found in the early endosome membrane. It localises to the golgi apparatus membrane. It catalyses the reaction L-cysteinyl-[protein] + hexadecanoyl-CoA = S-hexadecanoyl-L-cysteinyl-[protein] + CoA. In terms of biological role, palmitoyltransferase specific for casein kinase 1. The sequence is that of Palmitoyltransferase AKR1 (AKR1) from Gibberella zeae (strain ATCC MYA-4620 / CBS 123657 / FGSC 9075 / NRRL 31084 / PH-1) (Wheat head blight fungus).